We begin with the raw amino-acid sequence, 909 residues long: ABC transporter A family member 10 (909 aa).

The next 7 helical transmembrane spans lie at 35-55 (VLVP…LDVV), 320-340 (IASM…FPVI), 374-394 (FLTL…AIGL), 406-426 (FIFY…ASSI), 433-453 (ATVV…FLFG), 465-485 (GILA…YEFA), and 507-527 (LFYL…SIDL). Position 555 is a phosphoserine (S555). The ABC transporter domain occupies 587-824 (IVCDNLKKVY…YGGSYVFTMT (238 aa)). 625–632 (GPNGAGKT) is a binding site for ATP.

Belongs to the ABC transporter superfamily. ABCA family. CPR flippase (TC 3.A.1.211) subfamily.

The protein resides in the membrane. The sequence is that of ABC transporter A family member 10 (ABCA10) from Arabidopsis thaliana (Mouse-ear cress).